We begin with the raw amino-acid sequence, 353 residues long: Quinolinate synthase (353 aa).

Iminosuccinate-binding residues include His-47 and Ser-68. A [4Fe-4S] cluster-binding site is contributed by Cys-113. Iminosuccinate is bound by residues 139 to 141 (YAN) and Ser-156. Cys-200 is a [4Fe-4S] cluster binding site. Iminosuccinate-binding positions include 226–228 (HPE) and Thr-243. [4Fe-4S] cluster is bound at residue Cys-297.

It belongs to the quinolinate synthase family. Type 1 subfamily. [4Fe-4S] cluster is required as a cofactor.

It is found in the cytoplasm. The catalysed reaction is iminosuccinate + dihydroxyacetone phosphate = quinolinate + phosphate + 2 H2O + H(+). The protein operates within cofactor biosynthesis; NAD(+) biosynthesis; quinolinate from iminoaspartate: step 1/1. Functionally, catalyzes the condensation of iminoaspartate with dihydroxyacetone phosphate to form quinolinate. This is Quinolinate synthase from Erwinia tasmaniensis (strain DSM 17950 / CFBP 7177 / CIP 109463 / NCPPB 4357 / Et1/99).